The chain runs to 333 residues: Fructose-1,6-bisphosphatase class 1 (333 aa).

The Mg(2+) site is built by Glu-92, Asp-114, Leu-116, and Asp-117. Residues 117 to 120 and Asn-209 contribute to the substrate site; that span reads DGSS. Residue Glu-279 participates in Mg(2+) binding.

It belongs to the FBPase class 1 family. As to quaternary structure, homotetramer. It depends on Mg(2+) as a cofactor.

It localises to the cytoplasm. It carries out the reaction beta-D-fructose 1,6-bisphosphate + H2O = beta-D-fructose 6-phosphate + phosphate. Its pathway is carbohydrate biosynthesis; gluconeogenesis. This is Fructose-1,6-bisphosphatase class 1 from Alkalilimnicola ehrlichii (strain ATCC BAA-1101 / DSM 17681 / MLHE-1).